A 344-amino-acid polypeptide reads, in one-letter code: Holliday junction branch migration complex subunit RuvB (344 aa).

The segment at 1–185 (MTERSDRDVS…FGFTAHMDFY (185 aa)) is large ATPase domain (RuvB-L). ATP contacts are provided by residues Leu24, Arg25, Gly66, Lys69, Thr70, Ser71, 132–134 (EDF), Arg175, Tyr185, and Arg222. Thr70 serves as a coordination point for Mg(2+). The segment at 186–256 (EPAELERVLA…VAKAALEVYD (71 aa)) is small ATPAse domain (RuvB-S). The segment at 259 to 344 (ELGLDRLDRA…VGASQPGLFE (86 aa)) is head domain (RuvB-H). DNA-binding residues include Arg314 and Arg319.

It belongs to the RuvB family. In terms of assembly, homohexamer. Forms an RuvA(8)-RuvB(12)-Holliday junction (HJ) complex. HJ DNA is sandwiched between 2 RuvA tetramers; dsDNA enters through RuvA and exits via RuvB. An RuvB hexamer assembles on each DNA strand where it exits the tetramer. Each RuvB hexamer is contacted by two RuvA subunits (via domain III) on 2 adjacent RuvB subunits; this complex drives branch migration. In the full resolvosome a probable DNA-RuvA(4)-RuvB(12)-RuvC(2) complex forms which resolves the HJ.

The protein resides in the cytoplasm. The catalysed reaction is ATP + H2O = ADP + phosphate + H(+). Functionally, the RuvA-RuvB-RuvC complex processes Holliday junction (HJ) DNA during genetic recombination and DNA repair, while the RuvA-RuvB complex plays an important role in the rescue of blocked DNA replication forks via replication fork reversal (RFR). RuvA specifically binds to HJ cruciform DNA, conferring on it an open structure. The RuvB hexamer acts as an ATP-dependent pump, pulling dsDNA into and through the RuvAB complex. RuvB forms 2 homohexamers on either side of HJ DNA bound by 1 or 2 RuvA tetramers; 4 subunits per hexamer contact DNA at a time. Coordinated motions by a converter formed by DNA-disengaged RuvB subunits stimulates ATP hydrolysis and nucleotide exchange. Immobilization of the converter enables RuvB to convert the ATP-contained energy into a lever motion, pulling 2 nucleotides of DNA out of the RuvA tetramer per ATP hydrolyzed, thus driving DNA branch migration. The RuvB motors rotate together with the DNA substrate, which together with the progressing nucleotide cycle form the mechanistic basis for DNA recombination by continuous HJ branch migration. Branch migration allows RuvC to scan DNA until it finds its consensus sequence, where it cleaves and resolves cruciform DNA. The chain is Holliday junction branch migration complex subunit RuvB from Mycobacterium tuberculosis (strain ATCC 25177 / H37Ra).